A 162-amino-acid chain; its full sequence is Scytalone dehydratase-like protein claB (162 aa).

Tyrosine 48 provides a ligand contact to substrate. Catalysis depends on residues histidine 83 and histidine 108.

The protein belongs to the scytalone dehydratase family.

It participates in pigment biosynthesis. Its function is as follows. Scytalone dehydratase-like protein; part of the gene cluster that mediates the biosynthesis of the bianthraquinone cladofulvin, a conidial pigment not required for virulence but that plays a role in fitness and resistance to environmental stresses including UV light and low-temperature stress. The pathway begins with the synthesis of atrochrysone thioester by the polyketide synthase (PKS) claG. The atrochrysone carboxyl ACP thioesterase claF then breaks the thioester bond and releases the atrochrysone carboxylic acid from claG. This compound is decarboxylated by claH to yield emodin, which is further converted to chrysophanol hydroquinone by the reductase claC and the dehydratase claB. The cytochrome P450 monooxygenase claM then catalyzes the dimerization of nataloe-emodin to cladofulvin. The sequence is that of Scytalone dehydratase-like protein claB from Passalora fulva (Tomato leaf mold).